The sequence spans 223 residues: Small ribosomal subunit protein uS3 (223 aa).

The region spanning 39-117 is the KH type-2 domain; it reads IREFLRKKPS…RPELNAKLVA (79 aa).

This sequence belongs to the universal ribosomal protein uS3 family. Part of the 30S ribosomal subunit. Forms a tight complex with proteins S10 and S14.

Functionally, binds the lower part of the 30S subunit head. Binds mRNA in the 70S ribosome, positioning it for translation. This is Small ribosomal subunit protein uS3 from Chlamydia abortus (strain DSM 27085 / S26/3) (Chlamydophila abortus).